The primary structure comprises 470 residues: Nuclear receptor subfamily 0 group B member 1 (470 aa).

Tandem repeats lie at residues 1-67 (MAGE…YRCC), 68-133 (FCGK…YRCC), and 134-200 (FCGE…YRCC). A 4 X 67 AA tandem repeats region spans residues 1 to 253 (MAGEDHQWQG…RPVALKNPQV (253 aa)). Short sequence motifs (LXXLL motif) lie at residues 13–17 (LYNML), 80–84 (LYSML), and 146–150 (LYSLL). One copy of the 4; truncated repeat lies at 201–253 (FCGEDQPQQGSTLYSMPTSTNQTPAAPEERPGAPWWDTSCGALRPVALKNPQV). An NR LBD domain is found at 205-469 (DQPQQGSTLY…DMMLEMLCTK (265 aa)). The AF-2 motif motif lies at 461 to 466 (MMLEML).

The protein belongs to the nuclear hormone receptor family. NR0 subfamily. Homodimer. Interacts with NR5A1, NR5A2, NR0B2 and with COPS2. Interacts with ESRRB; represses ESRRB activity at the GATA6 promoter.

It localises to the nucleus. It is found in the cytoplasm. Nuclear receptor that lacks a DNA-binding domain and acts as a corepressor that inhibits the transcriptional activity of other nuclear receptors through heterodimeric interactions. Component of a cascade required for the development of the hypothalamic-pituitary-adrenal-gonadal axis. May also have a role in the development of the embryo and in the maintenance of embryonic stem cell pluripotency. The protein is Nuclear receptor subfamily 0 group B member 1 (NR0B1) of Callithrix jacchus (White-tufted-ear marmoset).